We begin with the raw amino-acid sequence, 326 residues long: AA10 family lytic polysaccharide monooxygenase C (326 aa).

The N-terminal stretch at 1–32 (MVFSNSNASVSLFRLVALVATLSHLVFTFVDA) is a signal peptide. Positions 33 and 118 each coordinate Cu(2+). The 168-residue stretch at 33–200 (HGYVTFPASR…ANAFYQCLDL (168 aa)) folds into the Chitin-binding type-4 domain. The cysteines at positions 81 and 197 are disulfide-linked. Asn206, Asn215, Asn266, and Asn303 each carry an N-linked (GlcNAc...) asparagine glycan. The interval 206 to 326 (NSSSSSSSSN…KSQMRRDRQG (121 aa)) is disordered. Low complexity predominate over residues 207–281 (SSSSSSSSNS…NNGGSSGSTT (75 aa)).

The protein belongs to the polysaccharide monooxygenase AA10 family. Requires Cu(2+) as cofactor.

It localises to the secreted. Lytic polysaccharide monooxygenase (LPMO) that oxidatively cleaves alpha- and beta-chitin with C1 regioselectivity. Catalysis by LPMOs requires the reduction of the active-site copper from Cu(II) to Cu(I) by a reducing agent and H(2)O(2) or O(2) as a cosubstrate. Exhibits enzymatic activity on U.maydis fungal cell wall chitin and Boosts chitin hydrolysis by chitinase GH18A. This Mycosarcoma maydis (Corn smut fungus) protein is AA10 family lytic polysaccharide monooxygenase C.